Consider the following 448-residue polypeptide: Methionine aminopeptidase 2-1 (448 aa).

Residues 1–83 are disordered; sequence MAAQVIPELQ…TQKAQTEPPR (83 aa). Residues 32–48 show a composition bias toward acidic residues; the sequence is ENEDGDSEDDNGDDQGA. Basic residues predominate over residues 59–73; sequence AKKKKKKKPKKKKKD. His198 provides a ligand contact to substrate. A divalent metal cation is bound by residues Asp218, Asp229, and His298. Position 306 (His306) interacts with substrate. A divalent metal cation-binding residues include Glu334 and Glu429.

The protein belongs to the peptidase M24A family. Methionine aminopeptidase eukaryotic type 2 subfamily. It depends on Co(2+) as a cofactor. Requires Zn(2+) as cofactor. The cofactor is Mn(2+). Fe(2+) is required as a cofactor.

Its subcellular location is the cytoplasm. The enzyme catalyses Release of N-terminal amino acids, preferentially methionine, from peptides and arylamides.. In terms of biological role, cotranslationally removes the N-terminal methionine from nascent proteins. The N-terminal methionine is often cleaved when the second residue in the primary sequence is small and uncharged (Met-Ala-, Cys, Gly, Pro, Ser, Thr, or Val). The chain is Methionine aminopeptidase 2-1 from Ajellomyces capsulatus (strain G186AR / H82 / ATCC MYA-2454 / RMSCC 2432) (Darling's disease fungus).